The chain runs to 1115 residues: DNA-directed RNA polymerase subunit beta (1115 aa).

The segment at 1084 to 1115 is disordered; the sequence is HEAGEGEDDEYFEEDEEAVDDEPMTFDDDDME. Residues 1088–1115 are compositionally biased toward acidic residues; that stretch reads EGEDDEYFEEDEEAVDDEPMTFDDDDME.

The protein belongs to the RNA polymerase beta chain family. In terms of assembly, the RNAP catalytic core consists of 2 alpha, 1 beta, 1 beta' and 1 omega subunit. When a sigma factor is associated with the core the holoenzyme is formed, which can initiate transcription.

It catalyses the reaction RNA(n) + a ribonucleoside 5'-triphosphate = RNA(n+1) + diphosphate. In terms of biological role, DNA-dependent RNA polymerase catalyzes the transcription of DNA into RNA using the four ribonucleoside triphosphates as substrates. In Desulfitobacterium hafniense (strain Y51), this protein is DNA-directed RNA polymerase subunit beta.